The primary structure comprises 418 residues: D-amino acid dehydrogenase 1 (418 aa).

FAD is bound at residue Ile3–Tyr17.

The protein belongs to the DadA oxidoreductase family. FAD serves as cofactor.

The enzyme catalyses a D-alpha-amino acid + A + H2O = a 2-oxocarboxylate + AH2 + NH4(+). It functions in the pathway amino-acid degradation; D-alanine degradation; NH(3) and pyruvate from D-alanine: step 1/1. Functionally, oxidative deamination of D-amino acids. This is D-amino acid dehydrogenase 1 (dadA1) from Mesorhizobium japonicum (strain LMG 29417 / CECT 9101 / MAFF 303099) (Mesorhizobium loti (strain MAFF 303099)).